A 343-amino-acid polypeptide reads, in one-letter code: MGSERIMTTQQQFLDLLSDIEPSTTTVNDCSSAHNTLRDALKVHNEFSKVHVHTFLSGSYKRNTAVRPTTIGGITQRPDVDIIALTNHTINDDPQIVLDAVHTALKDIGYTDLTVNRRSVNVKLKKVDMDVVPIISDGYGGYLIPDIHLEEWLVTNPPAHTEWTVEVNKNANGRFKPLVKLFKWWRRENLSDLKRPKGFILECLVAKHMNYYESNYEKLFVYLLETIRDSYGIYASLGIIPHLEDPGVAGNNVFSAVTADEFKTFFEKVEEQAAIARNALNETDDDKALALWRQVLGNRFPRSASHKSANSADMASSLIRSALGAGLTFPSTPVYPNKPGGFA.

Belongs to the CD-NTase family. D01 subfamily. The cofactor is Mg(2+).

The catalysed reaction is 3 ATP = 2',3',3'-c-tri-AMP + 3 diphosphate. Functionally, cyclic nucleotide synthase (second messenger synthase) of a CBASS antivirus system. CBASS (cyclic oligonucleotide-based antiphage signaling system) provides immunity against bacteriophage. The CD-NTase protein synthesizes cyclic nucleotides in response to infection; these serve as specific second messenger signals. The signals activate a diverse range of effectors, leading to bacterial cell death and thus abortive phage infection. A type II-C(AAAA) CBASS system. Cyclic trinucleotide synthase that catalyzes the synthesis of 2',3',3'-cyclic AMP-AMP-AMP (2',3',3'-c-tri-AMP or 2'3'3'-cAAA) as the major product, as well as another cyclic AMP(4) 2'-5'-linked minor product that acts as a second messenger for cell signal transduction. In Acinetobacter sp. (strain ATCC 27244 / 9458), this protein is Cyclic AMP-AMP-AMP synthase.